Here is a 405-residue protein sequence, read N- to C-terminus: Tryptophan synthase beta chain (405 aa).

Lysine 95 carries the N6-(pyridoxal phosphate)lysine modification.

This sequence belongs to the TrpB family. Tetramer of two alpha and two beta chains. Pyridoxal 5'-phosphate serves as cofactor.

It carries out the reaction (1S,2R)-1-C-(indol-3-yl)glycerol 3-phosphate + L-serine = D-glyceraldehyde 3-phosphate + L-tryptophan + H2O. It participates in amino-acid biosynthesis; L-tryptophan biosynthesis; L-tryptophan from chorismate: step 5/5. Functionally, the beta subunit is responsible for the synthesis of L-tryptophan from indole and L-serine. In Pseudomonas putida (strain W619), this protein is Tryptophan synthase beta chain.